The sequence spans 204 residues: Pantothenate transporter PanT (204 aa).

6 consecutive transmembrane segments (helical) span residues 18-38 (IILL…AVIV), 39-59 (GAQP…LGAR), 63-83 (FIGG…PGSI), 86-106 (LMFQ…LIIG), 123-143 (LGLG…VVLL), and 176-196 (IFEI…LVPI).

In E.coli forms a stable energy-coupling factor (ECF) transporter complex probably composed of a membrane-embedded substrate-binding protein (S component), two ATP-binding proteins (A components) and a transmembrane protein (T component).

Its subcellular location is the cell membrane. Probable pantothenate-binding protein that interacts with the energy-coupling factor (ECF) ABC-transporter complex. Unlike classic ABC transporters this ECF transporter provides the energy necessary to transport a number of different substrates. The substrates themselves are bound by transmembrane, not extracytoplasmic soluble proteins and transport it into cells. Upon coexpression with its energy-coupling factor (ECF) ABC-transporter complex EcfA1A2T in E.coli allows pantothenate uptake; uptake requires both PanT and EcfA1A2T. This Leuconostoc mesenteroides subsp. mesenteroides (strain ATCC 8293 / DSM 20343 / BCRC 11652 / CCM 1803 / JCM 6124 / NCDO 523 / NBRC 100496 / NCIMB 8023 / NCTC 12954 / NRRL B-1118 / 37Y) protein is Pantothenate transporter PanT (panT).